A 73-amino-acid chain; its full sequence is uncharacterized protein (73 aa).

N-glycosylated.

This is an uncharacterized protein from Saccharomyces cerevisiae (strain ATCC 204508 / S288c) (Baker's yeast).